The chain runs to 355 residues: UDP-glucose 4-epimerase uge1 (355 aa).

8–39 (TVLVTGGAGYIGSHTCVVLLEKGYDVVIVDNL) provides a ligand contact to NAD(+).

It belongs to the NAD(P)-dependent epimerase/dehydratase family. The cofactor is NAD(+).

It carries out the reaction UDP-alpha-D-glucose = UDP-alpha-D-galactose. Its pathway is carbohydrate metabolism; galactose metabolism. Its function is as follows. Major UDP-glucose/-galactose 4-epimerase under glucose-rich conditions involved in protein galactosylation. The chain is UDP-glucose 4-epimerase uge1 (uge1) from Schizosaccharomyces pombe (strain 972 / ATCC 24843) (Fission yeast).